Reading from the N-terminus, the 937-residue chain is Isoleucine--tRNA ligase (937 aa).

Residues 58–68 (PYANGDIHIGH) carry the 'HIGH' region motif. Glu561 contributes to the L-isoleucyl-5'-AMP binding site. The 'KMSKS' region signature appears at 602 to 606 (KMSKS). Lys605 is an ATP binding site. Zn(2+) contacts are provided by Cys900, Cys903, Cys920, and Cys923.

This sequence belongs to the class-I aminoacyl-tRNA synthetase family. IleS type 1 subfamily. Monomer. Requires Zn(2+) as cofactor.

Its subcellular location is the cytoplasm. The catalysed reaction is tRNA(Ile) + L-isoleucine + ATP = L-isoleucyl-tRNA(Ile) + AMP + diphosphate. Functionally, catalyzes the attachment of isoleucine to tRNA(Ile). As IleRS can inadvertently accommodate and process structurally similar amino acids such as valine, to avoid such errors it has two additional distinct tRNA(Ile)-dependent editing activities. One activity is designated as 'pretransfer' editing and involves the hydrolysis of activated Val-AMP. The other activity is designated 'posttransfer' editing and involves deacylation of mischarged Val-tRNA(Ile). This is Isoleucine--tRNA ligase from Alcanivorax borkumensis (strain ATCC 700651 / DSM 11573 / NCIMB 13689 / SK2).